Here is a 468-residue protein sequence, read N- to C-terminus: Transmembrane protein 151A (468 aa).

The disordered stretch occupies residues 1–20 (MPEGEGGDCGEVPALVPDGE). A run of 2 helical transmembrane segments spans residues 45-65 (CLLL…CRLA) and 98-118 (YLYI…AECW). Residues 384–438 (VSSNSLPPARPSGPRLPFSRSRLSLGAGGRTTPGVFRSLSGGPLGRRGEDTEPLE) form a disordered region.

Belongs to the TMEM151 family. Highly expressed in the central nervous system (CNS) including the cerebral cortex, hippocampus, spinal cord, brainstem, and thalamus. Expression is relatively low during postnatal stages but highly expressed at postnatal day 14 (P14), and declined in adulthood. Also expressed in the stomach, heart, liver, spleen, lung, kidney, and muscle.

The protein resides in the endoplasmic reticulum membrane. It is found in the cell projection. The protein localises to the axon. It localises to the dendrite. This chain is Transmembrane protein 151A (Tmem151a), found in Mus musculus (Mouse).